A 227-amino-acid chain; its full sequence is Small ribosomal subunit protein uS3 (227 aa).

A KH type-2 domain is found at 24–94 (LDEYLEEELG…RVSIEVKELP (71 aa)). The segment at 207 to 227 (EEVEDELKELIGKSEDEAEGA) is disordered.

It belongs to the universal ribosomal protein uS3 family. In terms of assembly, part of the 30S ribosomal subunit.

Its function is as follows. Binds the lower part of the 30S subunit head. This chain is Small ribosomal subunit protein uS3, found in Methanopyrus kandleri (strain AV19 / DSM 6324 / JCM 9639 / NBRC 100938).